The following is a 153-amino-acid chain: 3-hydroxyacyl-[acyl-carrier-protein] dehydratase FabZ (153 aa).

The active site involves His-47.

The protein belongs to the thioester dehydratase family. FabZ subfamily.

The protein resides in the cytoplasm. It catalyses the reaction a (3R)-hydroxyacyl-[ACP] = a (2E)-enoyl-[ACP] + H2O. In terms of biological role, involved in unsaturated fatty acids biosynthesis. Catalyzes the dehydration of short chain beta-hydroxyacyl-ACPs and long chain saturated and unsaturated beta-hydroxyacyl-ACPs. The protein is 3-hydroxyacyl-[acyl-carrier-protein] dehydratase FabZ of Myxococcus xanthus (strain DK1622).